We begin with the raw amino-acid sequence, 201 residues long: Inosine triphosphate pyrophosphatase (201 aa).

16–21 (TGNAKK) is an ITP binding site. A Mg(2+)-binding site is contributed by Glu-44. ITP-binding positions include Lys-56, 72-73 (DT), Lys-89, 148-151 (FGWD), Lys-171, and 176-177 (HR).

The protein belongs to the HAM1 NTPase family. As to quaternary structure, homodimer. Requires Mg(2+) as cofactor. It depends on Mn(2+) as a cofactor.

The protein localises to the cytoplasm. The enzyme catalyses ITP + H2O = IMP + diphosphate + H(+). It carries out the reaction dITP + H2O = dIMP + diphosphate + H(+). The catalysed reaction is XTP + H2O = XMP + diphosphate + H(+). Its function is as follows. Pyrophosphatase that hydrolyzes non-canonical purine nucleotides such as inosine triphosphate (ITP), deoxyinosine triphosphate (dITP) or xanthosine 5'-triphosphate (XTP) to their respective monophosphate derivatives. The enzyme does not distinguish between the deoxy- and ribose forms. Probably excludes non-canonical purines from RNA and DNA precursor pools, thus preventing their incorporation into RNA and DNA and avoiding chromosomal lesions. This chain is Inosine triphosphate pyrophosphatase, found in Zea mays (Maize).